The sequence spans 233 residues: Large ribosomal subunit protein uL1 (233 aa).

The protein belongs to the universal ribosomal protein uL1 family. Part of the 50S ribosomal subunit.

In terms of biological role, binds directly to 23S rRNA. The L1 stalk is quite mobile in the ribosome, and is involved in E site tRNA release. Protein L1 is also a translational repressor protein, it controls the translation of the L11 operon by binding to its mRNA. In Shewanella baltica (strain OS185), this protein is Large ribosomal subunit protein uL1.